A 220-amino-acid polypeptide reads, in one-letter code: MGRRPARCYRQIKNKPCPKSRYCRGVPDPKIRIYDVGMKRKGVDEFPYCVHLVSWERENVSSEALEAARIVCNKYMTKSAGKDAFHLRVRVHPFHVLRINKMLSCAGADRLQTGMRGAFGKPQGTCARVDIGQVLLSVRCKDNNAAHASEALRRAKFKFPARQKIIESRKWGFTKFSRADYLKYKSEGRIVPDGVNAKLLANHGRLEKRAPGKAFLDAVA.

This sequence belongs to the universal ribosomal protein uL16 family. Component of the small ribosomal subunit. Mature ribosomes consist of a small (40S) and a large (60S) subunit. The 40S subunit contains about 33 different proteins and 1 molecule of RNA (18S). The 60S subunit contains about 49 different proteins and 3 molecules of RNA (25S, 5.8S and 5S).

The sequence is that of Large ribosomal subunit protein uL16 (RPL10) from Zea mays (Maize).